The chain runs to 392 residues: Pannexin-3 (392 aa).

The Cytoplasmic portion of the chain corresponds to 1–39; it reads MSLAHTAAEYMLSDALLPDRRGSRLKGLRLELPLDKMVK. The chain crosses the membrane as a helical span at residues 40-60; it reads FVTVGFPLLLMSLAFAQEFSS. Residues 61–113 are Extracellular-facing; it reads GSPISCFSPSNFSVRQAVFVDSSCWDSLAHYKQDEAGQYTVKSLWPHKALPYS. N71 is a glycosylation site (N-linked (GlcNAc...) asparagine). A helical transmembrane segment spans residues 114–134; it reads LLALAVAMYLPVLLWQYAAVP. Residues 135-215 lie on the Cytoplasmic side of the membrane; sequence ALSSDLLFII…VATYLLRNAL (81 aa). Residues 216-236 traverse the membrane as a helical segment; that stretch reads LLLFTSATYLYLGHFHLDVFF. Residues 237–267 are Extracellular-facing; that stretch reads QEEFSCSIKTGLLHEETHVPELITCRLTSLS. The chain crosses the membrane as a helical span at residues 268–288; the sequence is VFQIVSVSSVAIYTVLVPVII. Residues 289–392 are Cytoplasmic-facing; that stretch reads YNLTRLCRWD…LTQHTYDEHP (104 aa).

This sequence belongs to the pannexin family. As to quaternary structure, homoheptameric. In terms of tissue distribution, skin.

Its subcellular location is the cell membrane. It is found in the cell junction. The protein localises to the gap junction. It localises to the endoplasmic reticulum membrane. The enzyme catalyses Ca(2+)(in) = Ca(2+)(out). It catalyses the reaction ATP(in) = ATP(out). In terms of biological role, regulator of osteoblast differentiation by functionning as a Ca(2+) channel in the endoplasmic reticulum which regulates calmodulin (CaM) pathways. Allows ATP release into the extracellular space and activation or purinergic receptors. This chain is Pannexin-3 (Panx3), found in Rattus norvegicus (Rat).